The chain runs to 81 residues: MTTTHDTNTKKLKYQFHTIHSQRIMTTVTQKPFTASPYIFSTTLRTTQTDGNNAINSHSHTQAGYNNSSERFLYLICTYIT.

This is an uncharacterized protein from Acidianus bottle-shaped virus (isolate Italy/Pozzuoli) (ABV).